A 740-amino-acid chain; its full sequence is DNA polymerase iota (740 aa).

The tract at residues 1 to 21 (MEKLGVEPEEEGGGDDDEEDA) is disordered. Over residues 7-21 (EPEEEGGGDDDEEDA) the composition is skewed to acidic residues. Positions 55–268 (IVHVDLDCFY…NHIKEIPGIG (214 aa)) constitute a UmuC domain. Positions 59 and 60 each coordinate Mg(2+). Residues Asp-59 and Leu-60 each contribute to the Mn(2+) site. 2 residues coordinate a 2'-deoxyribonucleoside 5'-triphosphate: Tyr-64 and Arg-96. Asp-151 contacts Mg(2+). Mn(2+) is bound at residue Asp-151. The active-site Proton acceptor is Glu-152. DNA-binding stretches follow at residues 249-314 (ESCQ…FGED) and 325-439 (QSFS…CNLK). The Ubiquitin-binding 1 (UBM1) motif lies at 527 to 544 (VDQEVFKQLPVDIQEEIL). Disordered regions lie at residues 581 to 615 (PINP…SSYM) and 671 to 704 (NHTT…KITF). Residues 605 to 615 (SGFNSSSSSYM) are compositionally biased toward low complexity. Positions 672-702 (HTTDSHKQTVATDSHEGLTENREPDSVDEKI) are enriched in basic and acidic residues. Positions 708 to 725 (IDPQVFYELPEAVQKELL) match the Ubiquitin-binding 2 (UBM2) motif.

It belongs to the DNA polymerase type-Y family. Interacts with POLH. Interacts with REV1. Interacts with ubiquitin. The cofactor is Mg(2+). Requires Mn(2+) as cofactor. In terms of processing, monoubiquitinated. Protein monoubiquitination prevents POLI binding to ubiquitin via the ubiquitin-binding motif 1 and ubiquitin-binding motif 2. Ubiquitous. Highly expressed in testis.

Its subcellular location is the nucleus. The catalysed reaction is DNA(n) + a 2'-deoxyribonucleoside 5'-triphosphate = DNA(n+1) + diphosphate. Its function is as follows. Error-prone DNA polymerase specifically involved in DNA repair. Plays an important role in translesion synthesis, where the normal high-fidelity DNA polymerases cannot proceed and DNA synthesis stalls. Favors Hoogsteen base-pairing in the active site. Inserts the correct base with high-fidelity opposite an adenosine template. Exhibits low fidelity and efficiency opposite a thymidine template, where it will preferentially insert guanosine. May play a role in hypermutation of immunoglobulin genes. Forms a Schiff base with 5'-deoxyribose phosphate at abasic sites, but may not have lyase activity. In Homo sapiens (Human), this protein is DNA polymerase iota (POLI).